Consider the following 120-residue polypeptide: MNRLMLRAKLHRATVTEADLHYEGSCGIDAALLEAADMREFEQIELYNVNNGERFSTYVIPAPPGSGVISLNGAAARKAHVGDLLIICTYAPMNDAEVATHKPKVVLLGPGNRIESVRKF.

Ser-25 functions as the Schiff-base intermediate with substrate; via pyruvic acid in the catalytic mechanism. Residue Ser-25 is modified to Pyruvic acid (Ser). Thr-57 contributes to the substrate binding site. The Proton donor role is filled by Tyr-58. A substrate-binding site is contributed by 73–75; it reads GAA.

It belongs to the PanD family. As to quaternary structure, heterooctamer of four alpha and four beta subunits. The cofactor is pyruvate. Is synthesized initially as an inactive proenzyme, which is activated by self-cleavage at a specific serine bond to produce a beta-subunit with a hydroxyl group at its C-terminus and an alpha-subunit with a pyruvoyl group at its N-terminus.

The protein resides in the cytoplasm. It carries out the reaction L-aspartate + H(+) = beta-alanine + CO2. The protein operates within cofactor biosynthesis; (R)-pantothenate biosynthesis; beta-alanine from L-aspartate: step 1/1. Catalyzes the pyruvoyl-dependent decarboxylation of aspartate to produce beta-alanine. This Methylibium petroleiphilum (strain ATCC BAA-1232 / LMG 22953 / PM1) protein is Aspartate 1-decarboxylase.